Reading from the N-terminus, the 683-residue chain is Boron transporter 4 (683 aa).

Residues 1-38 (MEEERVDSSKRLFRGIVADLRGRALCYKEDWVAGLRSG) are Cytoplasmic-facing. Residues 39–59 (FGILAPTTYIFFASALPVIAF) form a helical membrane-spanning segment. Residues 60–80 (GEQLSRDTEGALSTVETLAST) lie on the Extracellular side of the membrane. Residues 81–101 (ALCGVIHSILGGQPLLILGVA) traverse the membrane as a helical segment. The Cytoplasmic portion of the chain corresponds to 102–126 (EPTVLMYVYLYNFAIGRPELGKQLY). Residues 127-147 (LAWAAWVCVWTALLLFVMAIL) form a helical membrane-spanning segment. The Extracellular segment spans residues 148–160 (NTADIINRFTRVA). A helical transmembrane segment spans residues 161–181 (GELFGMLISVLFIQQAIKGMV). Residues 182–200 (SEFGMPKDEDSKLEKYKFE) are Cytoplasmic-facing. A helical transmembrane segment spans residues 201–221 (WLYTNGLLGLIFTFGLLYTAL). Residues 222 to 238 (KSRKARSWRYGTGWYRS) lie on the Extracellular side of the membrane. The helical transmembrane segment at 239–259 (FIADYGVPLMVVVWTALSFST) threads the bilayer. Residues 260–294 (PSKLPSGVPRRLFSPLPWDSPSLSHWTVIKDMGKV) lie on the Cytoplasmic side of the membrane. The chain crosses the membrane as a helical span at residues 295–315 (SPGYIFAAFIPALMIAGLYFF). Residues 316–335 (DHSVASQLAQQKEFNLKKPS) lie on the Extracellular side of the membrane. The chain crosses the membrane as a helical span at residues 336–356 (AYHYDILLLGFMTLICGLLGL). The Cytoplasmic portion of the chain corresponds to 357–477 (PPSNGVLPQS…EQRVSNLLQS (121 aa)). The helical transmembrane segment at 478–498 (LLVAGAVLAMPAIKLIPTSIL) threads the bilayer. Residues 499-565 (WGYFAYMAID…QIFYFGLCYG (67 aa)) are Extracellular-facing. The helical transmembrane segment at 566 to 586 (VTWIPVAGIMFPVPFFLLIAI) threads the bilayer. At 587-683 (RQYILPKLFN…GDGDMSTTRE (97 aa)) the chain is on the cytoplasmic side. Disordered regions lie at residues 617–638 (NPLELSFRSNDSKRGVQEGDAE) and 661–683 (KGNQIYPKEKVKAGDGDMSTTRE).

Belongs to the anion exchanger (TC 2.A.31.3) family. Expressed in the distal sides of epidermal cells in the elongation zone of roots.

It is found in the membrane. Its function is as follows. Efflux-type boron transporter polarly localized in roots. Boron is essential for maintaining the integrity of plants cell walls. The polypeptide is Boron transporter 4 (BOR4) (Arabidopsis thaliana (Mouse-ear cress)).